A 314-amino-acid chain; its full sequence is Probable cell division protein WhiA (314 aa).

The H-T-H motif DNA-binding region spans 274 to 308 (SLKELGEMVSTGPISKSGVNHRLRKLNDLADKIRN).

Belongs to the WhiA family.

Involved in cell division and chromosome segregation. This Staphylococcus aureus (strain USA300) protein is Probable cell division protein WhiA.